A 604-amino-acid polypeptide reads, in one-letter code: Elongation factor 4 (604 aa).

The tr-type G domain maps to K7–S189. Residues D19 to T24 and N136 to D139 contribute to the GTP site.

The protein belongs to the TRAFAC class translation factor GTPase superfamily. Classic translation factor GTPase family. LepA subfamily.

It localises to the cell membrane. The enzyme catalyses GTP + H2O = GDP + phosphate + H(+). Functionally, required for accurate and efficient protein synthesis under certain stress conditions. May act as a fidelity factor of the translation reaction, by catalyzing a one-codon backward translocation of tRNAs on improperly translocated ribosomes. Back-translocation proceeds from a post-translocation (POST) complex to a pre-translocation (PRE) complex, thus giving elongation factor G a second chance to translocate the tRNAs correctly. Binds to ribosomes in a GTP-dependent manner. The protein is Elongation factor 4 of Lachnospira eligens (strain ATCC 27750 / DSM 3376 / VPI C15-48 / C15-B4) (Eubacterium eligens).